Here is a 434-residue protein sequence, read N- to C-terminus: Trehalose-phosphatase (434 aa).

Positions 156 and 158 each coordinate Mg(2+). D158 serves as the catalytic Proton donor/acceptor. Residue 275 to 277 coordinates substrate; it reads QKK. D366 contributes to the Mg(2+) binding site.

This sequence belongs to the gob-1 trehalose phosphatase family. Mg(2+) serves as cofactor.

It carries out the reaction alpha,alpha-trehalose 6-phosphate + H2O = alpha,alpha-trehalose + phosphate. In terms of biological role, catalyzes the hydrolysis of trehalose 6-phosphate to trehalose and phosphate; prevents the accumulation of toxic levels of trehalose 6-phosphate. The protein is Trehalose-phosphatase (gob-1) of Caenorhabditis briggsae.